The primary structure comprises 129 residues: uncharacterized protein (129 aa).

This is an uncharacterized protein from Haemophilus influenzae (strain ATCC 51907 / DSM 11121 / KW20 / Rd).